Here is a 182-residue protein sequence, read N- to C-terminus: PRA1 family protein D (182 aa).

The residue at position 2 (Ala-2) is an N-acetylalanine. 3 helical membrane passes run 68 to 88, 107 to 127, and 129 to 149; these read LITR…WFFL, IVAV…GVWL, and ALTT…LRGT. The segment at 163 to 182 is disordered; that stretch reads PMLSTSGGGNDGARGDYSGI.

The protein belongs to the PRA1 family. As to quaternary structure, interacts with PRA1F2 and PRA1F3. Interacts with the cauliflower mosaic virus (CaMV) movement protein (via N-terminus). As to expression, expressed in hypocotyls, roots, lateral roots, lateral root caps, columella cells, leaves, shoot apex, stems and flowers.

The protein resides in the endosome membrane. May be involved in both secretory and endocytic intracellular trafficking in the endosomal/prevacuolar compartments. The protein is PRA1 family protein D (PRA1D) of Arabidopsis thaliana (Mouse-ear cress).